Here is a 163-residue protein sequence, read N- to C-terminus: Nucleotide-binding protein HAPS_2236 (163 aa).

The protein belongs to the YajQ family.

In terms of biological role, nucleotide-binding protein. The chain is Nucleotide-binding protein HAPS_2236 from Glaesserella parasuis serovar 5 (strain SH0165) (Haemophilus parasuis).